The following is a 520-amino-acid chain: Cytochrome P450 72A397 (520 aa).

A helical transmembrane segment spans residues 14-34; that stretch reads AVAVAVVVVGWAWKVLNWVWV. C468 is a binding site for heme.

This sequence belongs to the cytochrome P450 family. Requires heme as cofactor.

The protein localises to the membrane. It catalyses the reaction oleanolate + reduced [NADPH--hemoprotein reductase] + O2 = hederagenin + oxidized [NADPH--hemoprotein reductase] + H2O + H(+). Its function is as follows. Catalyzes the oxidation of oleanolate at the C-23 position to form hederagenin. This Kalopanax septemlobus (Castor aralia) protein is Cytochrome P450 72A397.